A 776-amino-acid chain; its full sequence is A-type ATP synthase subunit A (776 aa).

The protein belongs to the ATPase alpha/beta chains family. Has multiple subunits with at least A(3), B(3), C, D, E, F, H, I and proteolipid K(x). This protein undergoes a protein self splicing that involves a post-translational excision of the VDE intervening region (intein) followed by peptide ligation.

The protein localises to the cell membrane. The catalysed reaction is ATP + H2O + 4 H(+)(in) = ADP + phosphate + 5 H(+)(out). Its function is as follows. Component of the A-type ATP synthase that produces ATP from ADP in the presence of a proton gradient across the membrane. The A chain is the catalytic subunit. The polypeptide is A-type ATP synthase subunit A (Thermoplasma volcanium (strain ATCC 51530 / DSM 4299 / JCM 9571 / NBRC 15438 / GSS1)).